The following is a 136-amino-acid chain: Succinate dehydrogenase assembly factor 3, mitochondrial (136 aa).

The N-terminal 24 residues, M1 to A24, are a transit peptide targeting the mitochondrion.

Belongs to the complex I LYR family. SDHAF3 subfamily. As to quaternary structure, interacts with the iron-sulfur protein subunit within the SDH catalytic dimer.

Its subcellular location is the mitochondrion matrix. Functionally, plays an essential role in the assembly of succinate dehydrogenase (SDH), an enzyme complex (also referred to as respiratory complex II) that is a component of both the tricarboxylic acid (TCA) cycle and the mitochondrial electron transport chain, and which couples the oxidation of succinate to fumarate with the reduction of ubiquinone (coenzyme Q) to ubiquinol. Promotes maturation of the iron-sulfur protein subunit of the SDH catalytic dimer, protecting it from the deleterious effects of oxidants. May act together with SDHAF1. The protein is Succinate dehydrogenase assembly factor 3, mitochondrial of Pyricularia oryzae (strain 70-15 / ATCC MYA-4617 / FGSC 8958) (Rice blast fungus).